A 230-amino-acid chain; its full sequence is Broad specificity amino-acid racemase YgeA (230 aa).

Substrate is bound by residues M10, Q52, and 83–85; that span reads TNT. Catalysis depends on T83, which acts as the Proton donor. Residue C197 is the Proton acceptor of the active site. Residue 198 to 199 participates in substrate binding; it reads TE.

It belongs to the aspartate/glutamate racemases family.

It carries out the reaction an L-alpha-amino acid = a D-alpha-amino acid. The catalysed reaction is L-homoserine = D-homoserine. Functionally, amino-acid racemase able to utilize a broad range of substrates. Highest activity is observed with L-homoserine and D-homoserine. Has tenfold lower activity against L-methionine, L-leucine, L-valine and L-histidine. Has low activity with L-norvaline, L-asparagine, D-methionine, L-aminobutyric acid, L-isoleucine, L-serine, L-norleucine, L-alanine, L-glutamine, LL-diaminopimelic acid and L-phenylalanine. Has no activity against ten L-amino acids (Thr, Glu, Asp, Arg, Lys, Tyr, Trp, Orn, Cit and Aad). D-amino acids might be used as components of peptidoglycan and/or be involved in peptidoglycan metabolism and remodeling. This chain is Broad specificity amino-acid racemase YgeA (ygeA), found in Escherichia coli (strain K12).